The sequence spans 601 residues: DNA ligase (601 aa).

Asp258 serves as a coordination point for ATP. The active-site N6-AMP-lysine intermediate is the Lys260. 6 residues coordinate ATP: Arg265, Arg280, Glu310, Phe350, Arg427, and Lys433.

The protein belongs to the ATP-dependent DNA ligase family. Mg(2+) is required as a cofactor. The cofactor is Ca(2+). Requires Mn(2+) as cofactor.

The enzyme catalyses ATP + (deoxyribonucleotide)n-3'-hydroxyl + 5'-phospho-(deoxyribonucleotide)m = (deoxyribonucleotide)n+m + AMP + diphosphate.. DNA ligase that seals nicks in double-stranded DNA during DNA replication, DNA recombination and DNA repair. Also has low activity with dATP. Inactive with NAD(+), CTP, GTP, UTP, dCTP, dGTP or dTTP. The protein is DNA ligase of Saccharolobus shibatae (strain ATCC 51178 / DSM 5389 / JCM 8931 / NBRC 15437 / B12) (Sulfolobus shibatae).